Consider the following 354-residue polypeptide: uncharacterized protein (354 aa).

An N-terminal signal peptide occupies residues 1-21 (MRYLLIVITFFMGFSSLPAWA).

It to E.coli YbgO.

Its function is as follows. May be involved in a fimbrial system chaperoned by YqiH and exported by YqiG. This is an uncharacterized protein from Escherichia coli (strain K12).